Here is a 195-residue protein sequence, read N- to C-terminus: dITP/XTP pyrophosphatase (195 aa).

8–13 provides a ligand contact to substrate; that stretch reads TNNQGK. Residues E39 and D68 each contribute to the Mg(2+) site. D68 acts as the Proton acceptor in catalysis. Substrate contacts are provided by residues S69, 149 to 152, K172, and 177 to 178; these read FGYD and HR.

The protein belongs to the HAM1 NTPase family. Homodimer. It depends on Mg(2+) as a cofactor.

The catalysed reaction is XTP + H2O = XMP + diphosphate + H(+). It catalyses the reaction dITP + H2O = dIMP + diphosphate + H(+). It carries out the reaction ITP + H2O = IMP + diphosphate + H(+). Functionally, pyrophosphatase that catalyzes the hydrolysis of nucleoside triphosphates to their monophosphate derivatives, with a high preference for the non-canonical purine nucleotides XTP (xanthosine triphosphate), dITP (deoxyinosine triphosphate) and ITP. Seems to function as a house-cleaning enzyme that removes non-canonical purine nucleotides from the nucleotide pool, thus preventing their incorporation into DNA/RNA and avoiding chromosomal lesions. This chain is dITP/XTP pyrophosphatase, found in Staphylococcus epidermidis (strain ATCC 12228 / FDA PCI 1200).